The primary structure comprises 210 residues: Outer-membrane lipoprotein LolB (210 aa).

Residues 1-19 (MNHLKSFFTALVAGFILTA) form the signal peptide. Cys20 is lipidated: N-palmitoyl cysteine. The S-diacylglycerol cysteine moiety is linked to residue Cys20.

It belongs to the LolB family. Monomer.

It is found in the cell outer membrane. Its function is as follows. Plays a critical role in the incorporation of lipoproteins in the outer membrane after they are released by the LolA protein. The sequence is that of Outer-membrane lipoprotein LolB from Mannheimia succiniciproducens (strain KCTC 0769BP / MBEL55E).